Consider the following 152-residue polypeptide: CMT1A duplicated region transcript 4 protein (152 aa).

A compositionally biased stretch (basic and acidic residues) spans 1–11 (MDARRMKKEEG). 2 disordered regions span residues 1-23 (MDAR…RKLL) and 60-89 (ERPW…GKAV). Residues 65–74 (SRQNKPSSVI) are compositionally biased toward polar residues.

In terms of tissue distribution, expressed in fetal skeletal muscle and kidney.

The protein is CMT1A duplicated region transcript 4 protein (CDRT4) of Homo sapiens (Human).